Consider the following 227-residue polypeptide: MPKLLPPVVLAGCVVALGACSSPQHASSLPGTTPAVWTGSPSPSGAGAAEAAPAAAPSITTHLKAPDGTQVATAKFEFSNGYATVTIETTANGVLTPGFHGVHIHKVGKCEPSSVAPTGGAPGDFLSAGGHFQAPGHTGEPASGDLTSLQVRKDGSGTLVTTTDAFTMEDLLGGRKTAIIIHAGADNFANIPAERYNQTNGTPGPDEMTMSTGDAGKRVACGVIGAG.

The signal sequence occupies residues 1 to 19 (MPKLLPPVVLAGCVVALGA). Residue cysteine 20 is the site of N-palmitoyl cysteine attachment. The S-diacylglycerol cysteine moiety is linked to residue cysteine 20. A disordered region spans residues 23 to 55 (PQHASSLPGTTPAVWTGSPSPSGAGAAEAAPAA). Positions 39–55 (GSPSPSGAGAAEAAPAA) are enriched in low complexity. Cu cation is bound by residues histidine 103 and histidine 105. A disulfide bond links cysteine 110 and cysteine 221. Zn(2+) is bound at residue aspartate 145. Histidine 182 provides a ligand contact to Cu cation.

Belongs to the Cu-Zn superoxide dismutase family. Requires Cu cation as cofactor. The cofactor is Zn(2+).

The protein resides in the cell membrane. It catalyses the reaction 2 superoxide + 2 H(+) = H2O2 + O2. In terms of biological role, destroys radicals which are normally produced within the cells and which are toxic to biological systems. May play a role in favoring mycobacterial survival in phagocytes. The chain is Superoxide dismutase [Cu-Zn] (sodC) from Mycolicibacterium paratuberculosis (strain ATCC BAA-968 / K-10) (Mycobacterium paratuberculosis).